A 449-amino-acid chain; its full sequence is Phosphoglucosamine mutase (449 aa).

The active-site Phosphoserine intermediate is Ser101. Ser101, Asp242, Asp244, and Asp246 together coordinate Mg(2+). Residue Ser101 is modified to Phosphoserine.

The protein belongs to the phosphohexose mutase family. It depends on Mg(2+) as a cofactor. Post-translationally, activated by phosphorylation.

The enzyme catalyses alpha-D-glucosamine 1-phosphate = D-glucosamine 6-phosphate. Catalyzes the conversion of glucosamine-6-phosphate to glucosamine-1-phosphate. The protein is Phosphoglucosamine mutase of Methylocella silvestris (strain DSM 15510 / CIP 108128 / LMG 27833 / NCIMB 13906 / BL2).